The sequence spans 446 residues: Glutamine synthetase (446 aa).

Positions asparagine 14–glycine 106 constitute a GS beta-grasp domain. The GS catalytic domain maps to proline 113–isoleucine 446. The Mg(2+) site is built by glutamate 137 and glutamate 139. Glutamate 187 provides a ligand contact to ATP. Glutamate 192 and glutamate 199 together coordinate Mg(2+). Residues asparagine 243 to glycine 244 and glycine 244 contribute to the L-glutamate site. Mg(2+) is bound at residue histidine 248. Residues histidine 250–serine 252 and serine 252 each bind ATP. L-glutamate is bound by residues arginine 301, glutamate 307, and arginine 319. Positions 319, 324, and 331 each coordinate ATP. Glutamate 336 contacts Mg(2+). Arginine 338 contributes to the L-glutamate binding site.

It belongs to the glutamine synthetase family. Oligomer of 12 subunits arranged in the form of two hexagons. Requires Mg(2+) as cofactor.

Its subcellular location is the cytoplasm. The enzyme catalyses L-glutamate + NH4(+) + ATP = L-glutamine + ADP + phosphate + H(+). Functionally, probably involved in nitrogen metabolism via ammonium assimilation. Catalyzes the ATP-dependent biosynthesis of glutamine from glutamate and ammonia. The protein is Glutamine synthetase of Methanococcus maripaludis (strain DSM 14266 / JCM 13030 / NBRC 101832 / S2 / LL).